Consider the following 97-residue polypeptide: MICOS complex subunit MIC12 (97 aa).

Residues Leu7 to Tyr24 traverse the membrane as a helical segment.

The protein belongs to the MICOS complex subunit Mic12 family. As to quaternary structure, component of the mitochondrial contact site and cristae organizing system (MICOS) complex.

The protein resides in the mitochondrion inner membrane. Component of the MICOS complex, a large protein complex of the mitochondrial inner membrane that plays crucial roles in the maintenance of crista junctions, inner membrane architecture, and formation of contact sites to the outer membrane. The chain is MICOS complex subunit MIC12 (AIM5) from Zygosaccharomyces rouxii (strain ATCC 2623 / CBS 732 / NBRC 1130 / NCYC 568 / NRRL Y-229).